We begin with the raw amino-acid sequence, 46 residues long: Cytochrome b559 subunit beta (46 aa).

A helical transmembrane segment spans residues 21–37 (WLALHTLGIPTVFFLGA). Histidine 25 provides a ligand contact to heme.

The protein belongs to the PsbE/PsbF family. Heterodimer of an alpha subunit and a beta subunit. PSII is composed of 1 copy each of membrane proteins PsbA, PsbB, PsbC, PsbD, PsbE, PsbF, PsbH, PsbI, PsbJ, PsbK, PsbL, PsbM, PsbT, PsbX, PsbY, PsbZ, Psb30/Ycf12, peripheral proteins PsbO, CyanoQ (PsbQ), PsbU, PsbV and a large number of cofactors. It forms dimeric complexes. The cofactor is heme b.

Its subcellular location is the cellular thylakoid membrane. Its function is as follows. This b-type cytochrome is tightly associated with the reaction center of photosystem II (PSII). PSII is a light-driven water:plastoquinone oxidoreductase that uses light energy to abstract electrons from H(2)O, generating O(2) and a proton gradient subsequently used for ATP formation. It consists of a core antenna complex that captures photons, and an electron transfer chain that converts photonic excitation into a charge separation. The chain is Cytochrome b559 subunit beta from Synechococcus sp. (strain CC9605).